We begin with the raw amino-acid sequence, 239 residues long: Methylthioribulose-1-phosphate dehydratase (239 aa).

Residue Cys94 participates in substrate binding. Residues His112 and His114 each coordinate Zn(2+). The active-site Proton donor/acceptor is the Glu136. His192 lines the Zn(2+) pocket.

The protein belongs to the aldolase class II family. MtnB subfamily. Zn(2+) is required as a cofactor.

The protein resides in the cytoplasm. It carries out the reaction 5-(methylsulfanyl)-D-ribulose 1-phosphate = 5-methylsulfanyl-2,3-dioxopentyl phosphate + H2O. It functions in the pathway amino-acid biosynthesis; L-methionine biosynthesis via salvage pathway; L-methionine from S-methyl-5-thio-alpha-D-ribose 1-phosphate: step 2/6. Its function is as follows. Catalyzes the dehydration of methylthioribulose-1-phosphate (MTRu-1-P) into 2,3-diketo-5-methylthiopentyl-1-phosphate (DK-MTP-1-P). Functions in the methionine salvage pathway. May play a role in apoptosis. The protein is Methylthioribulose-1-phosphate dehydratase of Xenopus laevis (African clawed frog).